The chain runs to 130 residues: Protein ApaG (130 aa).

In terms of domain architecture, ApaG spans 3–127; sequence SAVTRGIEVT…FSLDVPEQRR (125 aa).

This is Protein ApaG from Brucella abortus (strain S19).